A 662-amino-acid chain; its full sequence is Glutathione hydrolase 7 (662 aa).

Over 1 to 106 (MAAENEASQE…ASECSCRQDG (106 aa)) the chain is Cytoplasmic. Residues Ser17, Ser72, Ser79, and Ser83 each carry the phosphoserine modification. The tract at residues 26–90 (SFPRLPEDEP…DGSPLRETRK (65 aa)) is disordered. Over residues 72–83 (SSSSEMGSQDGS) the composition is skewed to low complexity. Residues 107 to 127 (LTVIVTACLTFATGVTVALIM) form a helical; Signal-anchor for type II membrane protein membrane-spanning segment. Over 128–662 (QIYFGDPQIF…SPDAAGATIL (535 aa)) the chain is Extracellular. N-linked (GlcNAc...) asparagine glycans are attached at residues Asn198, Asn267, Asn283, Asn330, Asn353, Asn394, Asn452, Asn519, and Asn586.

The protein belongs to the gamma-glutamyltransferase family. In terms of assembly, heterodimer composed of the light and heavy chains. The active site is located in the light chain. Cleaved by autocatalysis into a large and a small subunit and the autocatalytic cleavage is essential to the functional activation of the enzyme.

The protein localises to the membrane. The catalysed reaction is an N-terminal (5-L-glutamyl)-[peptide] + an alpha-amino acid = 5-L-glutamyl amino acid + an N-terminal L-alpha-aminoacyl-[peptide]. The enzyme catalyses glutathione + H2O = L-cysteinylglycine + L-glutamate. It carries out the reaction an S-substituted glutathione + H2O = an S-substituted L-cysteinylglycine + L-glutamate. The protein operates within sulfur metabolism; glutathione metabolism. Its function is as follows. Hydrolyzes and transfers gamma-glutamyl moieties from glutathione and other gamma-glutamyl compounds to acceptors. This chain is Glutathione hydrolase 7, found in Bos taurus (Bovine).